Consider the following 268-residue polypeptide: Hydroxyethylthiazole kinase (268 aa).

M45 lines the substrate pocket. Residues R121 and T167 each contribute to the ATP site. G194 contributes to the substrate binding site.

This sequence belongs to the Thz kinase family. It depends on Mg(2+) as a cofactor.

It carries out the reaction 5-(2-hydroxyethyl)-4-methylthiazole + ATP = 4-methyl-5-(2-phosphooxyethyl)-thiazole + ADP + H(+). It participates in cofactor biosynthesis; thiamine diphosphate biosynthesis; 4-methyl-5-(2-phosphoethyl)-thiazole from 5-(2-hydroxyethyl)-4-methylthiazole: step 1/1. Functionally, catalyzes the phosphorylation of the hydroxyl group of 4-methyl-5-beta-hydroxyethylthiazole (THZ). In Bacillus cereus (strain Q1), this protein is Hydroxyethylthiazole kinase.